A 308-amino-acid chain; its full sequence is ATP synthase gamma chain (308 aa).

It belongs to the ATPase gamma chain family. As to quaternary structure, F-type ATPases have 2 components, CF(1) - the catalytic core - and CF(0) - the membrane proton channel. CF(1) has five subunits: alpha(3), beta(3), gamma(1), delta(1), epsilon(1). CF(0) has three main subunits: a, b and c.

The protein resides in the cell membrane. In terms of biological role, produces ATP from ADP in the presence of a proton gradient across the membrane. The gamma chain is believed to be important in regulating ATPase activity and the flow of protons through the CF(0) complex. This is ATP synthase gamma chain from Lacticaseibacillus paracasei (strain ATCC 334 / BCRC 17002 / CCUG 31169 / CIP 107868 / KCTC 3260 / NRRL B-441) (Lactobacillus paracasei).